The sequence spans 638 residues: 2-isopropylmalate synthase (638 aa).

The Pyruvate carboxyltransferase domain occupies 72-346 (PRWCSVDLRD…DPQLDLSNVP (275 aa)). Residues Asp-81, His-285, His-287, and Asn-321 each contribute to the Mg(2+) site. Residues 488–638 (VEQSGMTAAG…SAINRSQRQR (151 aa)) are regulatory domain.

Belongs to the alpha-IPM synthase/homocitrate synthase family. LeuA type 2 subfamily. In terms of assembly, homodimer. It depends on Mg(2+) as a cofactor.

It localises to the cytoplasm. The catalysed reaction is 3-methyl-2-oxobutanoate + acetyl-CoA + H2O = (2S)-2-isopropylmalate + CoA + H(+). The protein operates within amino-acid biosynthesis; L-leucine biosynthesis; L-leucine from 3-methyl-2-oxobutanoate: step 1/4. Its function is as follows. Catalyzes the condensation of the acetyl group of acetyl-CoA with 3-methyl-2-oxobutanoate (2-ketoisovalerate) to form 3-carboxy-3-hydroxy-4-methylpentanoate (2-isopropylmalate). In Bifidobacterium longum subsp. infantis (strain ATCC 15697 / DSM 20088 / JCM 1222 / NCTC 11817 / S12), this protein is 2-isopropylmalate synthase.